A 471-amino-acid chain; its full sequence is 6-phosphofructo-2-kinase/fructose-2,6-bisphosphatase 1 (471 aa).

Position 2 is an N-acetylserine (Ser-2). The 6-phosphofructo-2-kinase stretch occupies residues Ser-2 to Thr-250. Phosphoserine; by PKA is present on Ser-33. Position 49 to 57 (Gly-49 to Tyr-57) interacts with ATP. Positions 82 and 105 each coordinate beta-D-fructose 6-phosphate. The active site involves Asp-131. The beta-D-fructose 6-phosphate site is built by Thr-133 and Arg-139. Ser-141 carries the phosphoserine modification. Cys-161 is a catalytic residue. Asn-170 to Lys-175 is an ATP binding site. Lys-175, Arg-196, and Tyr-200 together coordinate beta-D-fructose 6-phosphate. The tract at residues Pro-251 to Tyr-471 is fructose-2,6-bisphosphatase. Arg-258 contributes to the beta-D-fructose 2,6-bisphosphate binding site. Catalysis depends on His-259, which acts as the Tele-phosphohistidine intermediate. Residues Asn-265, Gly-271, and Arg-308 each contribute to the beta-D-fructose 2,6-bisphosphate site. Catalysis depends on Glu-328, which acts as the Proton donor/acceptor. Tyr-339, Arg-353, Lys-357, Tyr-368, Gln-394, and Arg-398 together coordinate beta-D-fructose 2,6-bisphosphate. Phe-350–Arg-353 contacts ATP. ATP contacts are provided by residues Gln-394–Arg-398 and Tyr-430.

The protein in the C-terminal section; belongs to the phosphoglycerate mutase family. In terms of assembly, homodimer. In terms of tissue distribution, liver.

It carries out the reaction beta-D-fructose 2,6-bisphosphate + H2O = beta-D-fructose 6-phosphate + phosphate. The enzyme catalyses beta-D-fructose 6-phosphate + ATP = beta-D-fructose 2,6-bisphosphate + ADP + H(+). Phosphorylation at Ser-33 inhibits the kinase and activates the bisphosphatase. Its function is as follows. Synthesis and degradation of fructose 2,6-bisphosphate. This chain is 6-phosphofructo-2-kinase/fructose-2,6-bisphosphatase 1, found in Homo sapiens (Human).